Consider the following 160-residue polypeptide: Nucleotide-binding protein Patl_4311 (160 aa).

The protein belongs to the YajQ family.

In terms of biological role, nucleotide-binding protein. The protein is Nucleotide-binding protein Patl_4311 of Pseudoalteromonas atlantica (strain T6c / ATCC BAA-1087).